Here is a 102-residue protein sequence, read N- to C-terminus: Cytochrome c (102 aa).

At glycine 1 the chain carries N-acetylglycine. A compositionally biased stretch (basic and acidic residues) spans 1–11; sequence GDAERGKKLFE. The segment at 1–26 is disordered; that stretch reads GDAERGKKLFESRAGQCHSSQKGVNS. The heme c site is built by cysteine 17, histidine 18, and methionine 79. Polar residues predominate over residues 17 to 26; the sequence is CHSSQKGVNS. N6,N6,N6-trimethyllysine is present on lysine 85.

This sequence belongs to the cytochrome c family. In terms of processing, binds 1 heme c group covalently per subunit.

The protein localises to the mitochondrion intermembrane space. In terms of biological role, electron carrier protein. The oxidized form of the cytochrome c heme group can accept an electron from the heme group of the cytochrome c1 subunit of cytochrome reductase. Cytochrome c then transfers this electron to the cytochrome oxidase complex, the final protein carrier in the mitochondrial electron-transport chain. In Euglena viridis (Cercaria viridis), this protein is Cytochrome c.